The following is a 341-amino-acid chain: tRNA N6-adenosine threonylcarbamoyltransferase (341 aa).

Fe cation is bound by residues histidine 115 and histidine 119. Residues 137–141 (IVSGG), aspartate 170, glycine 183, aspartate 187, and asparagine 276 contribute to the substrate site. Fe cation is bound at residue aspartate 304.

Belongs to the KAE1 / TsaD family. The cofactor is Fe(2+).

It is found in the cytoplasm. The catalysed reaction is L-threonylcarbamoyladenylate + adenosine(37) in tRNA = N(6)-L-threonylcarbamoyladenosine(37) in tRNA + AMP + H(+). Its function is as follows. Required for the formation of a threonylcarbamoyl group on adenosine at position 37 (t(6)A37) in tRNAs that read codons beginning with adenine. Is involved in the transfer of the threonylcarbamoyl moiety of threonylcarbamoyl-AMP (TC-AMP) to the N6 group of A37, together with TsaE and TsaB. TsaD likely plays a direct catalytic role in this reaction. This chain is tRNA N6-adenosine threonylcarbamoyltransferase, found in Staphylococcus aureus (strain JH1).